The primary structure comprises 189 residues: Peptidyl-tRNA hydrolase (189 aa).

A tRNA-binding site is contributed by Y15. H20 functions as the Proton acceptor in the catalytic mechanism. 3 residues coordinate tRNA: F66, N68, and N114.

This sequence belongs to the PTH family. In terms of assembly, monomer.

The protein localises to the cytoplasm. The enzyme catalyses an N-acyl-L-alpha-aminoacyl-tRNA + H2O = an N-acyl-L-amino acid + a tRNA + H(+). Functionally, hydrolyzes ribosome-free peptidyl-tRNAs (with 1 or more amino acids incorporated), which drop off the ribosome during protein synthesis, or as a result of ribosome stalling. Its function is as follows. Catalyzes the release of premature peptidyl moieties from peptidyl-tRNA molecules trapped in stalled 50S ribosomal subunits, and thus maintains levels of free tRNAs and 50S ribosomes. The protein is Peptidyl-tRNA hydrolase of Streptococcus thermophilus (strain CNRZ 1066).